Here is a 324-residue protein sequence, read N- to C-terminus: 6-methylsalicylic acid decarboxylase (324 aa).

Residues His7, His9, His157, and Asp274 each coordinate Zn(2+).

This sequence belongs to the metallo-dependent hydrolases superfamily. ACMSD family. In terms of assembly, monomer.

It is found in the cytoplasm. The protein localises to the cytosol. The catalysed reaction is 6-methylsalicylate + H(+) = 3-methylphenol + CO2. It participates in mycotoxin biosynthesis; patulin biosynthesis. 6-methylsalicylic acid decarboxylase; part of the gene cluster that mediates the biosynthesis of patulin, an acetate-derived tetraketide mycotoxin produced by several fungal species that shows antimicrobial properties against several bacteria. PatG catalyzes the decarboxylation of 6-methylsalicylic acid to yield m-cresol. The pathway begins with the synthesis of 6-methylsalicylic acid by the polyketide synthase (PKS) patK via condensation of acetate and malonate units. The 6-methylsalicylic acid decarboxylase patG then catalyzes the decarboxylation of 6-methylsalicylic acid to yield m-cresol (also known as 3-methylphenol). These first reactions occur in the cytosol. The intermediate m-cresol is then transported into the endoplasmic reticulum where the cytochrome P450 monooxygenase patH converts it to m-hydroxybenzyl alcohol, which is further converted to gentisyl alcohol by the cytochrome P450 monooxygenase patI. The oxidoreductases patJ and patO further convert gentisyl alcohol to isoepoxydon in the vacuole. PatN catalyzes then the transformation of isoepoxydon into phyllostine. The cluster protein patF is responsible for the conversion from phyllostine to neopatulin whereas the alcohol dehydrogenase patD converts neopatulin to E-ascladiol. The steps between isoepoxydon and E-ascladiol occur in the cytosol, and E-ascladiol is probably secreted to the extracellular space by one of the cluster-specific transporters patC or patM. Finally, the secreted patulin synthase patE catalyzes the conversion of E-ascladiol to patulin. The protein is 6-methylsalicylic acid decarboxylase of Penicillium expansum (Blue mold rot fungus).